The following is a 555-amino-acid chain: Transcription factor kojR (555 aa).

A DNA-binding region (zn(2)-C6 fungal-type) is located at residues 21 to 47 (CETCKLRKRKCDGHEPCTYCLRYEYQC). The tract at residues 51-73 (PHPRRKPAASKSSARPSEEEDSP) is disordered.

The protein resides in the nucleus. Transcription factor that regulates the gene cluster that mediates the biosynthesis of 5-hydroxy-2-hydroxymethyl-1,4-pyrone, also know as kojic acid, a by-product in the fermentation process of malting rice that acts as a chelation agent. Mediates the expression of kojA and kojT via binding of an 11-nucleotide palindromic sequence, 5'-CGRCTWAGYCG-3' (R=A/G, W=A/T, Y=C/T) within the target gene promoters. The polypeptide is Transcription factor kojR (Aspergillus flavus (strain ATCC 200026 / FGSC A1120 / IAM 13836 / NRRL 3357 / JCM 12722 / SRRC 167)).